Consider the following 661-residue polypeptide: Peroxisomal acyl-coenzyme A oxidase 1 (661 aa).

S26 bears the Phosphoserine mark. Residue K65 is modified to N6-acetyllysine. 2 positions are modified to N6-succinyllysine: K89 and K90. An FAD-binding site is contributed by T139. K159 carries the N6-succinyllysine modification. An FAD-binding site is contributed by G178. K216 bears the N6-acetyllysine mark. N6-succinyllysine is present on K241. N6-acetyllysine is present on residues K255, K267, and K272. N6-succinyllysine is present on K349. The active-site Proton acceptor is E421. N6-acetyllysine; alternate is present on residues K437 and K446. 2 positions are modified to N6-succinyllysine; alternate: K437 and K446. N6-acetyllysine is present on K500. An N6-acetyllysine; alternate modification is found at K512. K512 is subject to N6-succinyllysine; alternate. K542 is subject to N6-succinyllysine. Position 637 is an N6-acetyllysine; alternate (K637). At K637 the chain carries N6-succinyllysine; alternate. K643 carries the N6-succinyllysine modification. S649 carries the post-translational modification Phosphoserine. Position 652 is an N6-acetyllysine (K652). K655 is modified (N6-succinyllysine). The short motif at 659–661 (SKL) is the Microbody targeting signal element.

The protein belongs to the acyl-CoA oxidase family. In terms of assembly, homodimer. Interacts with LONP2. It depends on FAD as a cofactor. Highest levels of isoform 1 are found in liver and kidney while highest levels of isoform 2 are found in white adipose tissue. Isoform 1 is expressed at higher levels than isoform 2 in liver and kidney while isoform 2 is expressed at higher levels in brain, heart, lung, muscle, white adipose tissue and testis.

It localises to the peroxisome. The enzyme catalyses a 2,3-saturated acyl-CoA + O2 = a (2E)-enoyl-CoA + H2O2. The catalysed reaction is hexadecanoyl-CoA + O2 = (2E)-hexadecenoyl-CoA + H2O2. It carries out the reaction dodecanoyl-CoA + O2 = (2E)-dodecenoyl-CoA + H2O2. It catalyses the reaction octanoyl-CoA + O2 = (2E)-octenoyl-CoA + H2O2. The enzyme catalyses decanoyl-CoA + O2 = (2E)-decenoyl-CoA + H2O2. The catalysed reaction is tetradecanoyl-CoA + O2 = (2E)-tetradecenoyl-CoA + H2O2. It carries out the reaction hexadecanedioyl-CoA + O2 = (2E)-hexadecenedioyl-CoA + H2O2. It catalyses the reaction tetracosanoyl-CoA + O2 = (2E)-tetracosenoyl-CoA + H2O2. The enzyme catalyses glutaryl-CoA + O2 = (2E)-glutaconyl-CoA + H2O2. The catalysed reaction is hexanoyl-CoA + O2 = (2E)-hexenoyl-CoA + H2O2. It carries out the reaction octadecanoyl-CoA + O2 = (2E)-octadecenoyl-CoA + H2O2. It catalyses the reaction (5Z,8Z,11Z,14Z,17Z)-eicosapentaenoyl-CoA + O2 = (2E,5Z,8Z,11Z,14Z,17Z)-icosahexaenoyl-CoA + H2O2. The enzyme catalyses (6Z,9Z,12Z,15Z,18Z,21Z)-tetracosahexaenoyl-CoA + O2 = (2E,6Z,9Z,12Z,15Z,18Z,21Z)-tetracosaheptaenoyl-CoA + H2O2. It participates in lipid metabolism; peroxisomal fatty acid beta-oxidation. Its function is as follows. Involved in the initial and rate-limiting step of peroxisomal beta-oxidation of straight-chain saturated and unsaturated very-long-chain fatty acids. Catalyzes the desaturation of fatty acyl-CoAs such as palmitoyl-CoA (hexadecanoyl-CoA) to 2-trans-enoyl-CoAs ((2E)-enoyl-CoAs) such as (2E)-hexadecenoyl-CoA, and donates electrons directly to molecular oxygen (O(2)), thereby producing hydrogen peroxide (H(2)O(2)). Functionally, shows highest activity against medium-chain fatty acyl-CoAs. Shows optimum activity with a chain length of 10 carbons (decanoyl-CoA) in vitro. Is active against a much broader range of substrates and shows activity towards long-chain acyl-CoAs. The sequence is that of Peroxisomal acyl-coenzyme A oxidase 1 from Mus musculus (Mouse).